The sequence spans 714 residues: Pre-mRNA-splicing factor CLF1 (714 aa).

HAT repeat units lie at residues 48–80, 83–115, 117–149, 151–182, 184–215, 265–305, 315–347, 349–384, 394–430, 435–470, 472–510, and 555–586; these read SFQLTKRKEYEQQLNKNRLNFGQWLRYAKWEVK, HDFPRARSIFERALEVNVQHIPFWTHYIQFELS, KNITHARNLLDRAVTTLPRVDKLWFLYVQTEET, KNYQMVRIIFERWLSWNPNPSAWDAYINYEKR, DEYDNAREIYIRYVQIHSSGEIWLKWIDFEMN, KEYE…FEKS, SIMIKRKLKYEEEVNKSPSDYDSWWSYISILQQ, DNNEVTRETFERAIKVIPTDAFKSTVWRRYIYIWVK, GSIENGRNIWNKALKVIPHKRFTFAKIWISFAQFEIR, NGLASARKILGRSIGQSSTVKPKRKLFKFYIELEQK, GEWDRVRKLYEKWLELSLVGENNLSTINSLLTYIDFEKN, and MRYAEARSLYRKLVERVSTPKVWISFALFESS.

The protein belongs to the crooked-neck family. In terms of assembly, associated with the spliceosome.

The protein resides in the nucleus. Involved in pre-mRNA splicing and cell cycle progression. Required for the spliceosome assembly and initiation of the DNA replication. This is Pre-mRNA-splicing factor CLF1 (CLF1) from Debaryomyces hansenii (strain ATCC 36239 / CBS 767 / BCRC 21394 / JCM 1990 / NBRC 0083 / IGC 2968) (Yeast).